The primary structure comprises 1285 residues: ABC-type transporter fsqE (1285 aa).

Positions 54 to 343 (VSSICAVLAG…IAPSAQALLS (290 aa)) constitute an ABC transmembrane type-1 1 domain. Transmembrane regions (helical) follow at residues 57–77 (ICAVLAGALNPLVPVIYGLLV), 102–122 (LYYVYLSIGLFAFTYVATVGF), 176–196 (LAVMLTAIATFCAAFVVAFIM), 203–223 (IISPFFVIMIVTETLGGAYMV), 281–301 (VAGMIAWMNAMPNLIYALAFW), and 312–332 (MSVAEVSATTLAVTIGSFAII). One can recognise an ABC transporter 1 domain in the interval 380–622 (LDRVGLIYPS…NGAYAALVQK (243 aa)). Residue 413–420 (GSSGSGKS) participates in ATP binding. Residue Asn-467 is glycosylated (N-linked (GlcNAc...) asparagine). Residues 627–654 (DTHDHKAPDGARLSIEDDDDEDSRYGGN) are disordered. The next 6 helical transmembrane spans lie at 707-727 (LFGLANAILAGLTIPVQSVFF), 753-773 (GLYVMLTGTTFLFWMGVEIAL), 831-851 (GILTFLSTILAGIVLALAIGW), 855-875 (LVCTATIPIVVACGWLRLQVL), 931-951 (ILLASALYAASASVVYLCAAL), and 968-988 (FQVYICFVSLISGSQIAGSIF). Residues 713–996 (AILAGLTIPV…IFTYAPDASK (284 aa)) form the ABC transmembrane type-1 2 domain. Asn-1037 carries an N-linked (GlcNAc...) asparagine glycan. One can recognise an ABC transporter 2 domain in the interval 1043 to 1281 (VEFEHVSFTY…RGKYWEMVSM (239 aa)). 1078–1085 (GQSGSGKS) lines the ATP pocket. N-linked (GlcNAc...) asparagine glycosylation is present at Asn-1138.

This sequence belongs to the ABC transporter superfamily. ABCB family. Multidrug resistance exporter (TC 3.A.1.201) subfamily.

The protein localises to the membrane. It functions in the pathway secondary metabolite biosynthesis. ABC-type transporter; part of the gene cluster that mediates the biosynthesis of the isoquinoline alkaloids fumisoquin A, fumisoquin B and fumisoquin C; as well as small amounts of fumipyrrole as a shunt metabolite. The products of the cluster lead to a brown coloration and are important for growth and conidiation. FsqE possibly plays a role of self-protection. The sequence is that of ABC-type transporter fsqE from Aspergillus fumigatus (strain ATCC MYA-4609 / CBS 101355 / FGSC A1100 / Af293) (Neosartorya fumigata).